Consider the following 998-residue polypeptide: UPF0182 protein AAur_2732 (998 aa).

A run of 7 helical transmembrane segments spans residues 18–38 (GALT…IFFA), 64–84 (IITF…AIRI), 115–135 (VVMI…AASQ), 168–188 (FLGF…IAGI), 211–231 (QIHI…NFWL), 260–280 (AILA…AIIG), and 287–307 (IGTA…PWVI). 3 disordered regions span residues 490 to 518 (GAPD…TFSG), 888 to 923 (LFGG…PTDA), and 971 to 998 (QARL…SPSS). The segment covering 496-509 (PNREQDRPAGREGG) has biased composition (basic and acidic residues). The segment covering 908–919 (TSPPGTTPPPAG) has biased composition (pro residues). The span at 976-990 (ATPAPTATPGATPSA) shows a compositional bias: low complexity.

The protein belongs to the UPF0182 family.

Its subcellular location is the cell membrane. In Paenarthrobacter aurescens (strain TC1), this protein is UPF0182 protein AAur_2732.